Here is a 552-residue protein sequence, read N- to C-terminus: CTP synthase (552 aa).

Residues 1–270 (MTKYVFVTGG…DRIICEELKL (270 aa)) are amidoligase domain. Residue Ser13 participates in CTP binding. Residue Ser13 participates in UTP binding. Residues 14-19 (SLGKGI) and Asp71 contribute to the ATP site. Mg(2+) contacts are provided by Asp71 and Glu144. Residues 151 to 153 (DIE), 191 to 196 (KTKPTQ), and Lys227 each bind CTP. Residues 191-196 (KTKPTQ) and Lys227 each bind UTP. A Glutamine amidotransferase type-1 domain is found at 295–547 (TIGMVGKYVD…VEAALANKQA (253 aa)). L-glutamine is bound at residue Gly356. Cys383 (nucleophile; for glutamine hydrolysis) is an active-site residue. Residues 384–387 (LGMQ), Glu407, and Arg473 contribute to the L-glutamine site. Residues His520 and Glu522 contribute to the active site.

Belongs to the CTP synthase family. Homotetramer.

The enzyme catalyses UTP + L-glutamine + ATP + H2O = CTP + L-glutamate + ADP + phosphate + 2 H(+). It catalyses the reaction L-glutamine + H2O = L-glutamate + NH4(+). The catalysed reaction is UTP + NH4(+) + ATP = CTP + ADP + phosphate + 2 H(+). It functions in the pathway pyrimidine metabolism; CTP biosynthesis via de novo pathway; CTP from UDP: step 2/2. Allosterically activated by GTP, when glutamine is the substrate; GTP has no effect on the reaction when ammonia is the substrate. The allosteric effector GTP functions by stabilizing the protein conformation that binds the tetrahedral intermediate(s) formed during glutamine hydrolysis. Inhibited by the product CTP, via allosteric rather than competitive inhibition. Its function is as follows. Catalyzes the ATP-dependent amination of UTP to CTP with either L-glutamine or ammonia as the source of nitrogen. Regulates intracellular CTP levels through interactions with the four ribonucleotide triphosphates. This chain is CTP synthase, found in Burkholderia cenocepacia (strain HI2424).